The primary structure comprises 220 residues: Large ribosomal subunit protein uL3 (220 aa).

The segment at 145 to 169 is disordered; the sequence is GPASHGSKFHRRPGSSGNRTWPGRV.

Belongs to the universal ribosomal protein uL3 family. Part of the 50S ribosomal subunit. Forms a cluster with proteins L14 and L19.

Functionally, one of the primary rRNA binding proteins, it binds directly near the 3'-end of the 23S rRNA, where it nucleates assembly of the 50S subunit. This Bdellovibrio bacteriovorus (strain ATCC 15356 / DSM 50701 / NCIMB 9529 / HD100) protein is Large ribosomal subunit protein uL3.